The following is a 525-amino-acid chain: MGFLQPGHTRPRICCPACCHARCKACGERGERGAVHRACNFKRRTAAVHHRTRPAVLQQYRPAPVESEAWRKAPPSSDRCKNARIFHHGPAGTVEYWSIFGEKKGALRASGSVRALTSTPRGYVVATDQGLWRVRTDTLNSTPDKTQAGKTAKQHQAPVPVRISTQRSCVALFATENMLIALFADGAVRAYDADGENELFSLTLPCTFSSAAQCRVQGDEIVLSDTARAITLSAGGALKWNISLYETPFTPLITTDGLVVSAGGWVLNAYRAETRLIDHTPIYNRDSYFHVLGSSRRAHVQEAPPSRPAAPAKRSPYDSIFSSDPFFSSPAPAKNSGKTDNAQETHTTSPPGPYATPELLLQAVQTSLKEGNVGPREPAYARSLHALLTSPHHARARAPAVTSARRAQAATLLGALGAHEYRDALLELLKEQDYTVLEGILKGLTRCTFGLDERALLALYRVTRAKDARAESLMRAACDALAACARSAPRTLSEKAVSELSRISTGAFPYTIRAYARTLVQSMLR.

Polar residues-rich tracts occupy residues 139-149 (LNSTPDKTQAG) and 336-349 (SGKT…HTTS). Disordered regions lie at residues 139–158 (LNST…HQAP) and 330–356 (PAPA…PYAT).

This is an uncharacterized protein from Treponema pallidum (strain Nichols).